Consider the following 277-residue polypeptide: Proteasome subunit beta type-7 (277 aa).

A propeptide spans methionine 1–glycine 43 (removed in mature form). The active-site Nucleophile is threonine 44.

The protein belongs to the peptidase T1B family. As to quaternary structure, the 26S proteasome consists of a 20S proteasome core and two 19S regulatory subunits. The 20S proteasome core is a barrel-shaped complex made of 28 subunits that are arranged in four stacked rings. The two outer rings are each formed by seven alpha subunits, and the two inner rings are formed by seven beta subunits. The proteolytic activity is exerted by three beta-subunits PSMB5, PSMB6 and PSMB7.

It is found in the cytoplasm. Its subcellular location is the nucleus. It carries out the reaction Cleavage of peptide bonds with very broad specificity.. Component of the 20S core proteasome complex involved in the proteolytic degradation of most intracellular proteins. This complex plays numerous essential roles within the cell by associating with different regulatory particles. Associated with two 19S regulatory particles, forms the 26S proteasome and thus participates in the ATP-dependent degradation of ubiquitinated proteins. The 26S proteasome plays a key role in the maintenance of protein homeostasis by removing misfolded or damaged proteins that could impair cellular functions, and by removing proteins whose functions are no longer required. Associated with the PA200 or PA28, the 20S proteasome mediates ubiquitin-independent protein degradation. This type of proteolysis is required in several pathways including spermatogenesis (20S-PA200 complex) or generation of a subset of MHC class I-presented antigenic peptides (20S-PA28 complex). Within the 20S core complex, PSMB7 displays a trypsin-like activity. This chain is Proteasome subunit beta type-7 (Psmb7), found in Mus musculus (Mouse).